We begin with the raw amino-acid sequence, 456 residues long: Bifunctional protein GlmU (456 aa).

Residues 1 to 229 (MSNSAMSVVI…LSEVEGVNNR (229 aa)) form a pyrophosphorylase region. UDP-N-acetyl-alpha-D-glucosamine is bound by residues 11–14 (LAAG), Lys25, Gln76, 81–82 (GT), 103–105 (YGD), Gly140, Glu154, Asn169, and Asn227. Asp105 contributes to the Mg(2+) binding site. Mg(2+) is bound at residue Asn227. A linker region spans residues 230–250 (LQLSRLERIYQAEQSEKLLLA). The tract at residues 251–456 (GVMLLDPARF…QGWQRPVKKK (206 aa)) is N-acetyltransferase. Residues Arg333 and Lys351 each contribute to the UDP-N-acetyl-alpha-D-glucosamine site. His363 functions as the Proton acceptor in the catalytic mechanism. Residues Tyr366 and Asn377 each coordinate UDP-N-acetyl-alpha-D-glucosamine. Acetyl-CoA-binding positions include Ala380, 386-387 (NY), Ser405, Ala423, and Arg440.

In the N-terminal section; belongs to the N-acetylglucosamine-1-phosphate uridyltransferase family. This sequence in the C-terminal section; belongs to the transferase hexapeptide repeat family. As to quaternary structure, homotrimer. The cofactor is Mg(2+).

The protein resides in the cytoplasm. The catalysed reaction is alpha-D-glucosamine 1-phosphate + acetyl-CoA = N-acetyl-alpha-D-glucosamine 1-phosphate + CoA + H(+). It catalyses the reaction N-acetyl-alpha-D-glucosamine 1-phosphate + UTP + H(+) = UDP-N-acetyl-alpha-D-glucosamine + diphosphate. It participates in nucleotide-sugar biosynthesis; UDP-N-acetyl-alpha-D-glucosamine biosynthesis; N-acetyl-alpha-D-glucosamine 1-phosphate from alpha-D-glucosamine 6-phosphate (route II): step 2/2. Its pathway is nucleotide-sugar biosynthesis; UDP-N-acetyl-alpha-D-glucosamine biosynthesis; UDP-N-acetyl-alpha-D-glucosamine from N-acetyl-alpha-D-glucosamine 1-phosphate: step 1/1. It functions in the pathway bacterial outer membrane biogenesis; LPS lipid A biosynthesis. Functionally, catalyzes the last two sequential reactions in the de novo biosynthetic pathway for UDP-N-acetylglucosamine (UDP-GlcNAc). The C-terminal domain catalyzes the transfer of acetyl group from acetyl coenzyme A to glucosamine-1-phosphate (GlcN-1-P) to produce N-acetylglucosamine-1-phosphate (GlcNAc-1-P), which is converted into UDP-GlcNAc by the transfer of uridine 5-monophosphate (from uridine 5-triphosphate), a reaction catalyzed by the N-terminal domain. This chain is Bifunctional protein GlmU, found in Serratia proteamaculans (strain 568).